The primary structure comprises 267 residues: 7alpha-hydroxysteroid dehydrogenase (267 aa).

NADP(+) contacts are provided by residues Ser-13–Ile-18, Arg-38, Asp-63–Ala-64, and Asn-90. Positions 145 and 158 each coordinate cholate. Residues Tyr-158, Lys-162, and Ile-191 to Ala-195 contribute to the NADP(+) site. The Proton acceptor role is filled by Tyr-158.

This sequence belongs to the short-chain dehydrogenases/reductases (SDR) family. In terms of assembly, homotetramer.

The catalysed reaction is cholate + NADP(+) = 3alpha,12alpha-dihydroxy-7-oxo-5beta-cholanate + NADPH + H(+). It carries out the reaction chenodeoxycholate + NADP(+) = 7-oxolithocholate + NADPH + H(+). Its function is as follows. 7alpha-hydroxysteroid dehydrogenase that catalyzes the NADP(+)-dependent oxidation of the 7alpha-hydroxy group of 7alpha-hydroxysteroids, such as the major human bile acids cholate and chenodeoxycholate, to the corresponding 7-oxosteroids. Is thus liley involved in the metabolism of primary bile acids. In Paraclostridium sordellii (Clostridium sordellii), this protein is 7alpha-hydroxysteroid dehydrogenase.